Reading from the N-terminus, the 284-residue chain is Nucleotide-binding protein CPS_4546 (284 aa).

8-15 (GRSGSGKS) serves as a coordination point for ATP. 56-59 (DVRN) is a GTP binding site.

This sequence belongs to the RapZ-like family.

In terms of biological role, displays ATPase and GTPase activities. The polypeptide is Nucleotide-binding protein CPS_4546 (Colwellia psychrerythraea (strain 34H / ATCC BAA-681) (Vibrio psychroerythus)).